Here is a 315-residue protein sequence, read N- to C-terminus: Methionyl-tRNA formyltransferase (315 aa).

113–116 (SILP) contributes to the (6S)-5,6,7,8-tetrahydrofolate binding site.

It belongs to the Fmt family.

The enzyme catalyses L-methionyl-tRNA(fMet) + (6R)-10-formyltetrahydrofolate = N-formyl-L-methionyl-tRNA(fMet) + (6S)-5,6,7,8-tetrahydrofolate + H(+). Functionally, attaches a formyl group to the free amino group of methionyl-tRNA(fMet). The formyl group appears to play a dual role in the initiator identity of N-formylmethionyl-tRNA by promoting its recognition by IF2 and preventing the misappropriation of this tRNA by the elongation apparatus. In Vibrio cholerae serotype O1 (strain ATCC 39541 / Classical Ogawa 395 / O395), this protein is Methionyl-tRNA formyltransferase.